We begin with the raw amino-acid sequence, 493 residues long: MEQPAPKSKLKKLSEDSLTKQPEEVFDVLEKLGEGSYGSVFKAIHKESGQVVAIKQVPVESDLQEIIKEISIMQQCDSHYVVKYYGSYFKNTDLWIVMEYCGAGSVSDIIRLRNKTLTEDEIATILRSTLKGLEYLHFMRKIHRDIKAGNILLNTEGHAKLADFGVAGQLTDTMAKRNTVIGTPFWMAPEVIQEIGYNCVADIWSLGITSIEMAEGKPPYADIHPMRAIFMIPTNPPPTFRKPELWTDEFTDFVKKCLVKNPEQRATATQLLQHPFIKNAKPVSILRDLITEAMDIKAKRHEELQRELEEEDENSEEDELDSHTMVKTNSESAGTMRAASTMSEGAQTMIEHNSTMLESDLGTMVINSDDEEEEEEEDGTMKRNATSPQGPRPSFMDYFDKQDSKNKPHDNCNQNLHEQYHISKNVFPDNWKVPPDGDFDFLKNLSFEELQMRLKALDPMMEREIEDLRQRYNAKRQPILDAMDAKKRRQQNF.

The Protein kinase domain occupies 26–277 (FDVLEKLGEG…ATQLLQHPFI (252 aa)). ATP contacts are provided by residues 32–40 (LGEGSYGSV) and Lys55. Asp145 (proton acceptor) is an active-site residue. The residue at position 179 (Thr179) is a Phosphothreonine; by autocatalysis. Residues 286–327 (LRDLITEAMDIKAKRHEELQRELEEEDENSEEDELDSHTMVK) are a coiled coil. Disordered stretches follow at residues 303 to 336 (ELQRELEEEDENSEEDELDSHTMVKTNSESAGTM) and 369 to 414 (DDEE…NCNQ). Positions 308 to 320 (LEEEDENSEEDEL) are enriched in acidic residues. Positions 325-336 (MVKTNSESAGTM) are enriched in polar residues. Acidic residues predominate over residues 369-378 (DDEEEEEEED). Over residues 398-410 (YFDKQDSKNKPHD) the composition is skewed to basic and acidic residues. An SARAH domain is found at 439–486 (FDFLKNLSFEELQMRLKALDPMMEREIEDLRQRYNAKRQPILDAMDAK). Residues 444–477 (NLSFEELQMRLKALDPMMEREIEDLRQRYNAKRQ) adopt a coiled-coil conformation.

The protein belongs to the protein kinase superfamily. STE Ser/Thr protein kinase family. STE20 subfamily. As to quaternary structure, homodimer; mediated via the coiled-coil region. Requires Mg(2+) as cofactor.

The protein localises to the cytoplasm. It is found in the nucleus. The enzyme catalyses L-seryl-[protein] + ATP = O-phospho-L-seryl-[protein] + ADP + H(+). The catalysed reaction is L-threonyl-[protein] + ATP = O-phospho-L-threonyl-[protein] + ADP + H(+). Its activity is regulated as follows. Inhibited by the C-terminal non-catalytic region. Activated by caspase-cleavage. Full activation also requires homodimerization and autophosphorylation of Thr-179. In terms of biological role, stress-activated, pro-apoptotic kinase which, following caspase-cleavage, enters the nucleus and induces chromatin condensation followed by internucleosomal DNA fragmentation. Key component of the Hippo signaling pathway which plays a pivotal role in organ size control and tumor suppression by restricting proliferation and promoting apoptosis. The core of this pathway is composed of a kinase cascade wherein stk3/mst2 and stk4/mst1, in complex with its regulatory protein sav1, phosphorylates and activates lats1/2 in complex with its regulatory protein mob1, which in turn phosphorylates and inactivates yap1 oncoprotein and wwtr1/taz. Phosphorylation of yap1 by lats2 inhibits its translocation into the nucleus to regulate cellular genes important for cell proliferation, cell death, and cell migration. This is Serine/threonine-protein kinase 3 (stk3) from Xenopus laevis (African clawed frog).